A 196-amino-acid chain; its full sequence is Endonuclease V (196 aa).

Residues Asp-37 and Asp-98 each contribute to the Mg(2+) site.

The protein belongs to the endonuclease V family. Mg(2+) is required as a cofactor.

It localises to the cytoplasm. It carries out the reaction Endonucleolytic cleavage at apurinic or apyrimidinic sites to products with a 5'-phosphate.. DNA repair enzyme involved in the repair of deaminated bases. Selectively cleaves double-stranded DNA at the second phosphodiester bond 3' to a deoxyinosine leaving behind the intact lesion on the nicked DNA. This Sulfurisphaera tokodaii (strain DSM 16993 / JCM 10545 / NBRC 100140 / 7) (Sulfolobus tokodaii) protein is Endonuclease V.